The sequence spans 83 residues: Host transcription reprogramming factor 9 (83 aa).

Positions 1-19 are cleaved as a signal peptide; that stretch reads MQFSKITLAIVLYALGTAA. Residues 54 to 77 form a C2H2-type zinc finger; sequence YRCDKCEKEFVKGNDFFNHGGRGH.

The protein resides in the secreted. Its subcellular location is the host nucleus. Functionally, probable secreted effector that translocates into the nuclei of host cells to reprogram the expression of targeted genes by binding on effector binding elements in rice. The protein is Host transcription reprogramming factor 9 of Pyricularia oryzae (strain 70-15 / ATCC MYA-4617 / FGSC 8958) (Rice blast fungus).